The sequence spans 211 residues: LexA repressor (211 aa).

A DNA-binding region (H-T-H motif) is located at residues arginine 35 to lysine 55. Residues serine 128 and lysine 165 each act as for autocatalytic cleavage activity in the active site.

This sequence belongs to the peptidase S24 family. Homodimer.

It carries out the reaction Hydrolysis of Ala-|-Gly bond in repressor LexA.. In terms of biological role, represses a number of genes involved in the response to DNA damage (SOS response), including recA and lexA. In the presence of single-stranded DNA, RecA interacts with LexA causing an autocatalytic cleavage which disrupts the DNA-binding part of LexA, leading to derepression of the SOS regulon and eventually DNA repair. The polypeptide is LexA repressor (Colwellia psychrerythraea (strain 34H / ATCC BAA-681) (Vibrio psychroerythus)).